We begin with the raw amino-acid sequence, 605 residues long: UvrABC system protein C (605 aa).

The GIY-YIG domain maps to 13–92; that stretch reads TSPGVYLMKD…IKKHHPKYNV (80 aa). In terms of domain architecture, UVR spans 205–240; the sequence is SEIIQDLEKSIEKASQEQKFEQAGIYYRTLKLIQQA.

The protein belongs to the UvrC family. Interacts with UvrB in an incision complex.

The protein localises to the cytoplasm. Its function is as follows. The UvrABC repair system catalyzes the recognition and processing of DNA lesions. UvrC both incises the 5' and 3' sides of the lesion. The N-terminal half is responsible for the 3' incision and the C-terminal half is responsible for the 5' incision. The sequence is that of UvrABC system protein C from Chlamydia caviae (strain ATCC VR-813 / DSM 19441 / 03DC25 / GPIC) (Chlamydophila caviae).